The primary structure comprises 358 residues: Peptide chain release factor 1 (358 aa).

Position 233 is an N5-methylglutamine (Gln-233).

This sequence belongs to the prokaryotic/mitochondrial release factor family. In terms of processing, methylated by PrmC. Methylation increases the termination efficiency of RF1.

The protein localises to the cytoplasm. Its function is as follows. Peptide chain release factor 1 directs the termination of translation in response to the peptide chain termination codons UAG and UAA. The protein is Peptide chain release factor 1 of Brevibacillus brevis (strain 47 / JCM 6285 / NBRC 100599).